Here is a 200-residue protein sequence, read N- to C-terminus: Dephospho-CoA kinase (200 aa).

The 198-residue stretch at 3–200 (IFGLTGGIGS…LNVNNKCNMD (198 aa)) folds into the DPCK domain. 11–16 (GSGKSL) contacts ATP.

The protein belongs to the CoaE family.

It localises to the cytoplasm. The enzyme catalyses 3'-dephospho-CoA + ATP = ADP + CoA + H(+). It functions in the pathway cofactor biosynthesis; coenzyme A biosynthesis; CoA from (R)-pantothenate: step 5/5. In terms of biological role, catalyzes the phosphorylation of the 3'-hydroxyl group of dephosphocoenzyme A to form coenzyme A. This Ehrlichia canis (strain Jake) protein is Dephospho-CoA kinase.